Reading from the N-terminus, the 426-residue chain is MSQVLDARAGKITPEMEKVAADEKVDVEFVRAGVAEGTIVIPRNTNRKVLKPCGIGRGLRIKVNALIGTSSDRDDRQMEMRKIAAAEAAGCDSFMDLSTGGDIDEMRRLTLAHARVPVGSVPIYQAAIEAIEKRGSIVAMTPDDMFAAVEKQARDGIDFMAIHSALNFEILERLQASGRVTDIVSRGGAFLTGWMLHNQKENPLYEQFDRLLEILLKYDVTLSLGDAIRPGSTADSLDGAQLQGMIVAGELVRRAREAGVQVMVEGPGHVPLNHVETTMKLQKSLCGGAPYFILGTLATDVAPGYDHITAAIGGALAGTVGADFICYVTPAEHLGLPTEQDVKEGVIAARIAAHAADLARGNRQAWERDLQMARARVALDVEKQISLAIDQEKARSLLDGTGEDGVCAACGTNCAALVAARYFGMN.

Residues Met-95, Tyr-124, His-163, 185–187 (SRG), 226–229 (DAIR), and Glu-265 contribute to the substrate site. His-269 contacts Zn(2+). Phe-292 is a binding site for substrate. His-333 contributes to the Zn(2+) binding site. Residues Cys-407, Cys-410, and Cys-414 each contribute to the [4Fe-4S] cluster site.

This sequence belongs to the ThiC family. 5-hydroxybenzimidazole synthase subfamily. [4Fe-4S] cluster is required as a cofactor.

It catalyses the reaction 5-amino-1-(5-phospho-beta-D-ribosyl)imidazole + AH2 + S-adenosyl-L-methionine = 5-hydroxybenzimidazole + 5'-deoxyadenosine + formate + L-methionine + A + NH4(+) + phosphate + 2 H(+). Its function is as follows. Together with BzaA, probably catalyzes the conversion of aminoimidazole ribotide (AIR) to 5-hydroxybenzimidazole (5-HBI) in a radical S-adenosyl-L-methionine (SAM)-dependent reaction. Is thus involved in the anaerobic biosynthesis of the benzimidazole lower axial ligand of the cobamide produced by M.thermoacetica. Requires BzaA for catalytic activity, as BzaB alone displays no activity. In Moorella thermoacetica (strain ATCC 39073 / JCM 9320), this protein is 5-hydroxybenzimidazole synthase BzaB.